We begin with the raw amino-acid sequence, 386 residues long: Glucose-1-phosphate adenylyltransferase (386 aa).

Residues Tyr-100, Gly-165, 180–181, and Ser-191 each bind alpha-D-glucose 1-phosphate; that span reads EK.

This sequence belongs to the bacterial/plant glucose-1-phosphate adenylyltransferase family. Homotetramer.

The enzyme catalyses alpha-D-glucose 1-phosphate + ATP + H(+) = ADP-alpha-D-glucose + diphosphate. It functions in the pathway glycan biosynthesis; glycogen biosynthesis. Its function is as follows. Involved in the biosynthesis of ADP-glucose, a building block required for the elongation reactions to produce glycogen. Catalyzes the reaction between ATP and alpha-D-glucose 1-phosphate (G1P) to produce pyrophosphate and ADP-Glc. In Clostridium botulinum (strain Alaska E43 / Type E3), this protein is Glucose-1-phosphate adenylyltransferase.